The chain runs to 378 residues: ATP phosphoribosyltransferase regulatory subunit (378 aa).

This sequence belongs to the class-II aminoacyl-tRNA synthetase family. HisZ subfamily. As to quaternary structure, heteromultimer composed of HisG and HisZ subunits.

The protein resides in the cytoplasm. The protein operates within amino-acid biosynthesis; L-histidine biosynthesis; L-histidine from 5-phospho-alpha-D-ribose 1-diphosphate: step 1/9. Its function is as follows. Required for the first step of histidine biosynthesis. May allow the feedback regulation of ATP phosphoribosyltransferase activity by histidine. This is ATP phosphoribosyltransferase regulatory subunit from Brucella abortus (strain 2308).